Reading from the N-terminus, the 188-residue chain is Elongation factor P (188 aa).

The protein belongs to the elongation factor P family.

It localises to the cytoplasm. It participates in protein biosynthesis; polypeptide chain elongation. Functionally, involved in peptide bond synthesis. Stimulates efficient translation and peptide-bond synthesis on native or reconstituted 70S ribosomes in vitro. Probably functions indirectly by altering the affinity of the ribosome for aminoacyl-tRNA, thus increasing their reactivity as acceptors for peptidyl transferase. This Mycoplasmoides gallisepticum (strain R(low / passage 15 / clone 2)) (Mycoplasma gallisepticum) protein is Elongation factor P.